Consider the following 259-residue polypeptide: Ribosomal RNA small subunit methyltransferase J (259 aa).

S-adenosyl-L-methionine contacts are provided by residues 101–102 (RD), 117–118 (ER), 153–154 (SS), and aspartate 176.

This sequence belongs to the methyltransferase superfamily. RsmJ family.

It localises to the cytoplasm. The catalysed reaction is guanosine(1516) in 16S rRNA + S-adenosyl-L-methionine = N(2)-methylguanosine(1516) in 16S rRNA + S-adenosyl-L-homocysteine + H(+). In terms of biological role, specifically methylates the guanosine in position 1516 of 16S rRNA. The protein is Ribosomal RNA small subunit methyltransferase J of Vibrio parahaemolyticus serotype O3:K6 (strain RIMD 2210633).